A 452-amino-acid chain; its full sequence is Probable ECA polymerase (452 aa).

11 consecutive transmembrane segments (helical) span residues 6-26, 37-57, 63-83, 118-138, 155-175, 181-201, 207-227, 228-248, 341-361, 378-398, and 410-430; these read FSGLLVVWLLSTLFIATLTWF, VFFSLLFLLTFFFGFPLTSVL, VGVAPPEILLQALLSAACFYG, VILMGIALVSVAIFFMHNGFL, GVALKRFFYFFIPAMLVVYFL, AWLFFLVSTVAFGLLTYMIVG, IIIAFAIFLFIGIIRGWISLW, MLAAAGVLGIVGMFWLALKRY, LVVMGGALFIPLGAIVVGLII, YKAAILHSFCFGAIFNMIVLA, and VFFLVVFGASLLVAKLLFWLF.

Belongs to the WzyE family. In terms of assembly, probably part of a complex composed of WzxE, WzyE and WzzE.

The protein resides in the cell inner membrane. It participates in bacterial outer membrane biogenesis; enterobacterial common antigen biosynthesis. Functionally, probably involved in the polymerization of enterobacterial common antigen (ECA) trisaccharide repeat units. The protein is Probable ECA polymerase of Salmonella heidelberg (strain SL476).